We begin with the raw amino-acid sequence, 360 residues long: DNA replication and repair protein RecF (360 aa).

Residue 30–37 coordinates ATP; the sequence is GHNGSGKT.

The protein belongs to the RecF family.

The protein localises to the cytoplasm. Functionally, the RecF protein is involved in DNA metabolism; it is required for DNA replication and normal SOS inducibility. RecF binds preferentially to single-stranded, linear DNA. It also seems to bind ATP. The polypeptide is DNA replication and repair protein RecF (Shewanella pealeana (strain ATCC 700345 / ANG-SQ1)).